The primary structure comprises 620 residues: Dihydroxy-acid dehydratase (620 aa).

Asp-82 is a binding site for Mg(2+). Cys-123 serves as a coordination point for [2Fe-2S] cluster. Residues Asp-124 and Lys-125 each coordinate Mg(2+). Lys-125 bears the N6-carboxylysine mark. Cys-197 is a [2Fe-2S] cluster binding site. A Mg(2+)-binding site is contributed by Glu-493. Residue Ser-519 is the Proton acceptor of the active site.

It belongs to the IlvD/Edd family. Homodimer. [2Fe-2S] cluster is required as a cofactor. It depends on Mg(2+) as a cofactor.

It carries out the reaction (2R)-2,3-dihydroxy-3-methylbutanoate = 3-methyl-2-oxobutanoate + H2O. The catalysed reaction is (2R,3R)-2,3-dihydroxy-3-methylpentanoate = (S)-3-methyl-2-oxopentanoate + H2O. It functions in the pathway amino-acid biosynthesis; L-isoleucine biosynthesis; L-isoleucine from 2-oxobutanoate: step 3/4. It participates in amino-acid biosynthesis; L-valine biosynthesis; L-valine from pyruvate: step 3/4. Functions in the biosynthesis of branched-chain amino acids. Catalyzes the dehydration of (2R,3R)-2,3-dihydroxy-3-methylpentanoate (2,3-dihydroxy-3-methylvalerate) into 2-oxo-3-methylpentanoate (2-oxo-3-methylvalerate) and of (2R)-2,3-dihydroxy-3-methylbutanoate (2,3-dihydroxyisovalerate) into 2-oxo-3-methylbutanoate (2-oxoisovalerate), the penultimate precursor to L-isoleucine and L-valine, respectively. This chain is Dihydroxy-acid dehydratase, found in Bifidobacterium longum (strain NCC 2705).